Here is a 479-residue protein sequence, read N- to C-terminus: tRNA-2-methylthio-N(6)-dimethylallyladenosine synthase (479 aa).

The 117-residue stretch at 6–122 (KTVYIKTVGC…IPDMLTKVTS (117 aa)) folds into the MTTase N-terminal domain. Cys15, Cys51, Cys85, Cys172, Cys176, and Cys179 together coordinate [4Fe-4S] cluster. Residues 158–390 (RPTPFQAYLR…LAVQDRISKE (233 aa)) form the Radical SAM core domain. The TRAM domain occupies 393–464 (QKLIGDTVEV…SHTLIGRVKT (72 aa)).

This sequence belongs to the methylthiotransferase family. MiaB subfamily. As to quaternary structure, monomer. [4Fe-4S] cluster is required as a cofactor.

The protein localises to the cytoplasm. The enzyme catalyses N(6)-dimethylallyladenosine(37) in tRNA + (sulfur carrier)-SH + AH2 + 2 S-adenosyl-L-methionine = 2-methylsulfanyl-N(6)-dimethylallyladenosine(37) in tRNA + (sulfur carrier)-H + 5'-deoxyadenosine + L-methionine + A + S-adenosyl-L-homocysteine + 2 H(+). Functionally, catalyzes the methylthiolation of N6-(dimethylallyl)adenosine (i(6)A), leading to the formation of 2-methylthio-N6-(dimethylallyl)adenosine (ms(2)i(6)A) at position 37 in tRNAs that read codons beginning with uridine. This chain is tRNA-2-methylthio-N(6)-dimethylallyladenosine synthase, found in Rhodopirellula baltica (strain DSM 10527 / NCIMB 13988 / SH1).